Reading from the N-terminus, the 87-residue chain is Small ribosomal subunit protein uS17 (87 aa).

This sequence belongs to the universal ribosomal protein uS17 family. In terms of assembly, part of the 30S ribosomal subunit.

Functionally, one of the primary rRNA binding proteins, it binds specifically to the 5'-end of 16S ribosomal RNA. This is Small ribosomal subunit protein uS17 from Cytophaga hutchinsonii (strain ATCC 33406 / DSM 1761 / CIP 103989 / NBRC 15051 / NCIMB 9469 / D465).